Reading from the N-terminus, the 494-residue chain is Anthranilate synthase component 1 (494 aa).

L-tryptophan is bound by residues Ser-52 and 274–276 (PYM). 309–310 (GT) provides a ligand contact to chorismate. Mg(2+) is bound at residue Glu-336. Chorismate contacts are provided by residues Tyr-424, Arg-444, 458-460 (GAG), and Gly-460. Mg(2+) is bound at residue Glu-473.

The protein belongs to the anthranilate synthase component I family. As to quaternary structure, heterotetramer consisting of two non-identical subunits: a beta subunit (TrpG) and a large alpha subunit (TrpE). Mg(2+) is required as a cofactor.

It carries out the reaction chorismate + L-glutamine = anthranilate + pyruvate + L-glutamate + H(+). Its pathway is amino-acid biosynthesis; L-tryptophan biosynthesis; L-tryptophan from chorismate: step 1/5. With respect to regulation, feedback inhibited by tryptophan. Its function is as follows. Part of a heterotetrameric complex that catalyzes the two-step biosynthesis of anthranilate, an intermediate in the biosynthesis of L-tryptophan. In the first step, the glutamine-binding beta subunit (TrpG) of anthranilate synthase (AS) provides the glutamine amidotransferase activity which generates ammonia as a substrate that, along with chorismate, is used in the second step, catalyzed by the large alpha subunit of AS (TrpE) to produce anthranilate. In the absence of TrpG, TrpE can synthesize anthranilate directly from chorismate and high concentrations of ammonia. This chain is Anthranilate synthase component 1 (trpE), found in Aquifex aeolicus (strain VF5).